We begin with the raw amino-acid sequence, 688 residues long: Potassium-transporting ATPase ATP-binding subunit (688 aa).

The next 4 helical transmembrane spans lie at 37 to 57 (FLVY…LVGI), 65 to 85 (ILGI…AEAI), 219 to 239 (IALQ…TVSL), and 262 to 282 (VALL…SIGI). Residue Asp-313 is the 4-aspartylphosphate intermediate of the active site. ATP-binding positions include Asp-350, Glu-354, 383 to 390 (FTAKTRMS), and Lys-401. Positions 524 and 528 each coordinate Mg(2+). Transmembrane regions (helical) follow at residues 594-614 (FAII…LNIM), 622-642 (AIFS…PLAL), and 668-688 (IIVP…IGIV).

It belongs to the cation transport ATPase (P-type) (TC 3.A.3) family. Type IA subfamily. As to quaternary structure, the system is composed of three essential subunits: KdpA, KdpB and KdpC.

The protein localises to the cell membrane. The catalysed reaction is K(+)(out) + ATP + H2O = K(+)(in) + ADP + phosphate + H(+). Its function is as follows. Part of the high-affinity ATP-driven potassium transport (or Kdp) system, which catalyzes the hydrolysis of ATP coupled with the electrogenic transport of potassium into the cytoplasm. This subunit is responsible for energy coupling to the transport system and for the release of the potassium ions to the cytoplasm. This chain is Potassium-transporting ATPase ATP-binding subunit, found in Clostridium botulinum (strain Eklund 17B / Type B).